Consider the following 554-residue polypeptide: MTRLDNTRVIRPATGTELTAKSWLTEAPLRMLMNNLHPDVAERPEELVVYGGIGRAARDWESYDKIVETLRRLEDDETLLVQSGKPVGVFKTHPDAPRVLIANSNLVPRWATWEHFNELDRKGLAMYGQMTAGSWIYIGAQGIVQGTYETFVEMGRQHHGGDLAGKWLLTAGLGGMGGAQPLAAVMAGASCLAIECQPSRIEMRLRTGYLDKATERLDEALAWIAEANAAKAPVSVGLLGNAAELLPAMFAAGVRPDLLTDQTSAHDPINGYLPAGWTLDQWATAKEREPETVNRAARASMAVHVQAMLDFQAAGVPTVDYGNNIRQMALEEGVKNAFDFPGFVPAYIRPLFCRGIGPFRWAALSGDPEDIAKTDAKVKELIPDNPHLHHWLDMAAEKIKFQGLPARICWVGLGDRHRLGLAFNAMVASGELKAPVVIGRDHLDSGSVASPNRETEAMMDGSDAVSDWPLLNALLNTASGATWVSLHHGGGVGMGFSQHAGMVIVADGTEAAAKRLARVLWNDPASGVMRHADAGYEIAKACAREHGLDLPGIL.

NAD(+)-binding positions include 51 to 52 (GG), glutamine 129, 175 to 177 (GMG), glutamate 195, arginine 200, 241 to 242 (NA), 262 to 266 (QTSAH), 272 to 273 (YL), and tyrosine 321. Cysteine 409 is a catalytic residue. Residue glycine 491 participates in NAD(+) binding.

Belongs to the urocanase family. NAD(+) is required as a cofactor.

The protein resides in the cytoplasm. The enzyme catalyses 4-imidazolone-5-propanoate = trans-urocanate + H2O. It participates in amino-acid degradation; L-histidine degradation into L-glutamate; N-formimidoyl-L-glutamate from L-histidine: step 2/3. Catalyzes the conversion of urocanate to 4-imidazolone-5-propionate. The sequence is that of Urocanate hydratase from Caulobacter sp. (strain K31).